The chain runs to 140 residues: Bacilliredoxin STH2395 (140 aa).

It belongs to the bacilliredoxin family.

The protein is Bacilliredoxin STH2395 of Symbiobacterium thermophilum (strain DSM 24528 / JCM 14929 / IAM 14863 / T).